Here is a 159-residue protein sequence, read N- to C-terminus: Transcription antitermination protein NusB (159 aa).

The interval 1 to 20 (MNKNTQGKPSGKPVRRDGVD) is disordered.

It belongs to the NusB family.

In terms of biological role, involved in transcription antitermination. Required for transcription of ribosomal RNA (rRNA) genes. Binds specifically to the boxA antiterminator sequence of the ribosomal RNA (rrn) operons. The chain is Transcription antitermination protein NusB from Stenotrophomonas maltophilia (strain R551-3).